The following is a 674-amino-acid chain: Collagen alpha-1(X) chain (674 aa).

The first 18 residues, M1–G18, serve as a signal peptide directing secretion. Residues V19–R56 are nonhelical region (NC2). Positions S54–L521 are disordered. The segment at G57–V519 is triple-helical region. The segment covering G106–K116 has biased composition (low complexity). A compositionally biased stretch (pro residues) spans P137–P147. C194 and C197 form a disulfide bridge. Positions P207–P217 are enriched in pro residues. 4 stretches are compositionally biased toward low complexity: residues I277 to P293, L303 to P312, E393 to P403, and P441 to P453. Residues P460 and P463 each carry the 4-hydroxyproline modification. The span at L506–P516 shows a compositional bias: pro residues. The tract at residues A520–M674 is nonhelical region (NC1). The C1q domain maps to T541–M674. Ca(2+)-binding residues include D620, E621, L627, and D628.

As to quaternary structure, homotrimer. In terms of processing, hydroxylation on proline residues within the sequence motif, GXPG, is most likely to be 4-hydroxy as this fits the requirement for 4-hydroxylation in vertebrates.

Its subcellular location is the secreted. The protein localises to the extracellular space. The protein resides in the extracellular matrix. Type X collagen is a product of hypertrophic chondrocytes and has been localized to presumptive mineralization zones of hyaline cartilage. In Bos taurus (Bovine), this protein is Collagen alpha-1(X) chain (COL10A1).